A 484-amino-acid chain; its full sequence is MKLIVKTFQEITIKSRPVRKRFIRQLAKNIRAVLRDLDPELKVEGEWDNLEVETAVVDAKVRREMIERLTCTPGIGHFLEVHEYPLGDFDDILAKCKAHFGDQLAGKTFAVRCKRAGKHAFTSMEVERYVGSGLRRECGAAGIDLKQPEVEVRMEIRLDRLFVIHRQHPGLGGYPLGALEQVLVLMSGGFDSTVAAYQMMRRGMISHFVFFNLGGRAHELGVMEVAHYLWEKYGRSQRVLFISVPFEEVVGEILTKVDDSYMGVTLKRMMLRAASRVAERLELDALVTGEAISQVSSQTLPNLSVIDRVTDTLVLRPLIVSHKQDIIDTARQIGTAEFARHMPEYCGVISVNPTTQAKPYRVEHEESKFDMAVLERALERATQRTVDRVIDELGQDLQVEEVGEVLPGQIVIDIRHPDAQEDEPLALEGVEVQALPFYAINSRFKELDANRQYLLYCDKGVMSRLHAHHLLNEGHTNVRVYRPA.

The THUMP domain maps to 63-167; the sequence is REMIERLTCT…LDRLFVIHRQ (105 aa). ATP is bound by residues 185–186, Lys-267, Gly-289, and Gln-298; that span reads LM. A disulfide bridge links Cys-346 with Cys-457. A Rhodanese domain is found at 405-483; the sequence is VLPGQIVIDI…GHTNVRVYRP (79 aa). Cys-457 acts as the Cysteine persulfide intermediate in catalysis.

It belongs to the ThiI family.

It is found in the cytoplasm. It catalyses the reaction [ThiI sulfur-carrier protein]-S-sulfanyl-L-cysteine + a uridine in tRNA + 2 reduced [2Fe-2S]-[ferredoxin] + ATP + H(+) = [ThiI sulfur-carrier protein]-L-cysteine + a 4-thiouridine in tRNA + 2 oxidized [2Fe-2S]-[ferredoxin] + AMP + diphosphate. The enzyme catalyses [ThiS sulfur-carrier protein]-C-terminal Gly-Gly-AMP + S-sulfanyl-L-cysteinyl-[cysteine desulfurase] + AH2 = [ThiS sulfur-carrier protein]-C-terminal-Gly-aminoethanethioate + L-cysteinyl-[cysteine desulfurase] + A + AMP + 2 H(+). It participates in cofactor biosynthesis; thiamine diphosphate biosynthesis. In terms of biological role, catalyzes the ATP-dependent transfer of a sulfur to tRNA to produce 4-thiouridine in position 8 of tRNAs, which functions as a near-UV photosensor. Also catalyzes the transfer of sulfur to the sulfur carrier protein ThiS, forming ThiS-thiocarboxylate. This is a step in the synthesis of thiazole, in the thiamine biosynthesis pathway. The sulfur is donated as persulfide by IscS. This Pseudomonas aeruginosa (strain UCBPP-PA14) protein is tRNA sulfurtransferase.